Here is a 179-residue protein sequence, read N- to C-terminus: RNA pyrophosphohydrolase (179 aa).

Positions 6-149 (GYRANVGIVI…KKPIYEDMLK (144 aa)) constitute a Nudix hydrolase domain. The short motif at 38–59 (GGIDFGESELDALFRELNEEIG) is the Nudix box element.

The protein belongs to the Nudix hydrolase family. RppH subfamily. A divalent metal cation serves as cofactor.

Its function is as follows. Accelerates the degradation of transcripts by removing pyrophosphate from the 5'-end of triphosphorylated RNA, leading to a more labile monophosphorylated state that can stimulate subsequent ribonuclease cleavage. The sequence is that of RNA pyrophosphohydrolase from Ruthia magnifica subsp. Calyptogena magnifica.